A 579-amino-acid polypeptide reads, in one-letter code: Proline--tRNA ligase (579 aa).

Belongs to the class-II aminoacyl-tRNA synthetase family. ProS type 1 subfamily. Homodimer.

It localises to the cytoplasm. It carries out the reaction tRNA(Pro) + L-proline + ATP = L-prolyl-tRNA(Pro) + AMP + diphosphate. In terms of biological role, catalyzes the attachment of proline to tRNA(Pro) in a two-step reaction: proline is first activated by ATP to form Pro-AMP and then transferred to the acceptor end of tRNA(Pro). As ProRS can inadvertently accommodate and process non-cognate amino acids such as alanine and cysteine, to avoid such errors it has two additional distinct editing activities against alanine. One activity is designated as 'pretransfer' editing and involves the tRNA(Pro)-independent hydrolysis of activated Ala-AMP. The other activity is designated 'posttransfer' editing and involves deacylation of mischarged Ala-tRNA(Pro). The misacylated Cys-tRNA(Pro) is not edited by ProRS. The chain is Proline--tRNA ligase from Hamiltonella defensa subsp. Acyrthosiphon pisum (strain 5AT).